Here is a 156-residue protein sequence, read N- to C-terminus: ATP synthase subunit b (156 aa).

Residues Leu7–Pro27 traverse the membrane as a helical segment.

The protein belongs to the ATPase B chain family. In terms of assembly, F-type ATPases have 2 components, F(1) - the catalytic core - and F(0) - the membrane proton channel. F(1) has five subunits: alpha(3), beta(3), gamma(1), delta(1), epsilon(1). F(0) has three main subunits: a(1), b(2) and c(10-14). The alpha and beta chains form an alternating ring which encloses part of the gamma chain. F(1) is attached to F(0) by a central stalk formed by the gamma and epsilon chains, while a peripheral stalk is formed by the delta and b chains.

The protein resides in the cell membrane. F(1)F(0) ATP synthase produces ATP from ADP in the presence of a proton or sodium gradient. F-type ATPases consist of two structural domains, F(1) containing the extramembraneous catalytic core and F(0) containing the membrane proton channel, linked together by a central stalk and a peripheral stalk. During catalysis, ATP synthesis in the catalytic domain of F(1) is coupled via a rotary mechanism of the central stalk subunits to proton translocation. Functionally, component of the F(0) channel, it forms part of the peripheral stalk, linking F(1) to F(0). The sequence is that of ATP synthase subunit b from Polynucleobacter asymbioticus (strain DSM 18221 / CIP 109841 / QLW-P1DMWA-1) (Polynucleobacter necessarius subsp. asymbioticus).